Reading from the N-terminus, the 288-residue chain is MPLITGKTKLLGVIGDPVEHSLSPVMHNAVIDHLNLNYIYVPFAVKPEDLRTAIAGLEAIGVVGFNLTIPHKQTIIPLLSTISETAQLVGAVNTVWRTETGWSGTNTDVHGFLAPLKRLNLPWSQVSPVILGNGGAARAVVVGCYEMGCRQISVVGRTKEKLDHFYQSWQNTPIQEALRVYLWEDLPQLVSKTQLLINTTPLGMSPHIDQSPVDLTVMKKLQPGAIAYDLIYTPNPTLFLKEAQQQGAIIIDGLEMLAQQGALALSIWIKQSVPVEIMSQSLRDYLNL.

Shikimate is bound by residues Ser21 to Ser23 and Thr68. Lys72 acts as the Proton acceptor in catalysis. NADP(+) is bound at residue Glu84. Asn93 and Asp108 together coordinate shikimate. NADP(+) contacts are provided by residues Gly132–Ala136 and Leu230. Tyr232 provides a ligand contact to shikimate. Residue Gly253 coordinates NADP(+).

The protein belongs to the shikimate dehydrogenase family. Homodimer.

It carries out the reaction shikimate + NADP(+) = 3-dehydroshikimate + NADPH + H(+). Its pathway is metabolic intermediate biosynthesis; chorismate biosynthesis; chorismate from D-erythrose 4-phosphate and phosphoenolpyruvate: step 4/7. In terms of biological role, involved in the biosynthesis of the chorismate, which leads to the biosynthesis of aromatic amino acids. Catalyzes the reversible NADPH linked reduction of 3-dehydroshikimate (DHSA) to yield shikimate (SA). The chain is Shikimate dehydrogenase (NADP(+)) from Gloeothece citriformis (strain PCC 7424) (Cyanothece sp. (strain PCC 7424)).